The primary structure comprises 306 residues: Uracil phosphoribosyltransferase homolog (306 aa).

Disordered regions lie at residues 1–28 (MATE…NPEP) and 58–87 (SSVP…NYDA). Composition is skewed to polar residues over residues 13–28 (CHNQ…NPEP) and 70–79 (GGATFNSENN). GTP-binding positions include R130, R139, and 173–176 (EKGN). R183 is a 5-phospho-alpha-D-ribose 1-diphosphate binding site. The GTP site is built by R200 and R229. Residue 235 to 243 (YPILSTGNT) participates in 5-phospho-alpha-D-ribose 1-diphosphate binding. A uracil-binding site is contributed by 296–298 (THF).

It belongs to the UPRTase family.

The protein resides in the cytoplasm. It is found in the nucleus. This chain is Uracil phosphoribosyltransferase homolog (UPRT), found in Bos taurus (Bovine).